The primary structure comprises 246 residues: Small ribosomal subunit protein uS2 (246 aa).

The protein belongs to the universal ribosomal protein uS2 family.

The polypeptide is Small ribosomal subunit protein uS2 (Stutzerimonas stutzeri (strain A1501) (Pseudomonas stutzeri)).